A 35-amino-acid polypeptide reads, in one-letter code: Basic endochitinase CH1 (35 aa).

The protein belongs to the glycosyl hydrolase 19 family. Chitinase class I subfamily.

It catalyses the reaction Random endo-hydrolysis of N-acetyl-beta-D-glucosaminide (1-&gt;4)-beta-linkages in chitin and chitodextrins.. Its function is as follows. Defense against chitin-containing fungal pathogens. The sequence is that of Basic endochitinase CH1 from Castanea sativa (Sweet chestnut).